The chain runs to 217 residues: Probable GTP-binding protein EngB (217 aa).

Residues 37–214 (DGVEIAFAGR…RAAMAKLLEE (178 aa)) enclose the EngB-type G domain. Residues 45-52 (GRSNVGKS), 72-76 (GRTQE), 92-95 (DMPG), 159-162 (TKAD), and 193-195 (TSS) contribute to the GTP site. 2 residues coordinate Mg(2+): serine 52 and threonine 74.

The protein belongs to the TRAFAC class TrmE-Era-EngA-EngB-Septin-like GTPase superfamily. EngB GTPase family. Mg(2+) is required as a cofactor.

Functionally, necessary for normal cell division and for the maintenance of normal septation. This is Probable GTP-binding protein EngB from Bradyrhizobium diazoefficiens (strain JCM 10833 / BCRC 13528 / IAM 13628 / NBRC 14792 / USDA 110).